We begin with the raw amino-acid sequence, 85 residues long: U4-theraphotoxin-Hhn1m (85 aa).

A signal peptide spans 1 to 22 (MKVTLIAILTCAAVLVLHTTAA). The propeptide occupies 23–48 (EELEAESQLVEVGMPDTELAAVDEER). Cystine bridges form between cysteine 52–cysteine 66, cysteine 56–cysteine 77, and cysteine 71–cysteine 82.

The protein belongs to the neurotoxin 12 (Hwtx-2) family. 02 (Hwtx-2) subfamily. In terms of tissue distribution, expressed by the venom gland.

The protein localises to the secreted. Its function is as follows. Postsynaptic neurotoxin. This is U4-theraphotoxin-Hhn1m from Cyriopagopus hainanus (Chinese bird spider).